Consider the following 561-residue polypeptide: Mercuric reductase (561 aa).

In terms of domain architecture, HMA spans 2-65 (THLKITGMTC…AVAGLGYKAT (64 aa)). A metal cation contacts are provided by C11 and C14. The FAD site is built by A110, G130, and T135. Cysteines 136 and 141 form a disulfide. FAD is bound by residues K145, A211, D403, and V411. Hg(2+)-binding residues include C558 and C559.

This sequence belongs to the class-I pyridine nucleotide-disulfide oxidoreductase family. Homodimer. The cofactor is FAD.

It carries out the reaction Hg + NADP(+) + H(+) = Hg(2+) + NADPH. Functionally, resistance to Hg(2+) in bacteria appears to be governed by a specialized system which includes mercuric reductase. MerA protein is responsible for volatilizing mercury as Hg(0). Plays a pivotal role in mercury resistance under thiol-depleted conditions and cell protection. Protects cells under thiol-depleted conditions. This is Mercuric reductase (merA) from Pseudomonas aeruginosa.